We begin with the raw amino-acid sequence, 213 residues long: Thiamine-phosphate synthase (213 aa).

Residues 43–47 (QLRDK) and Asn-74 each bind 4-amino-2-methyl-5-(diphosphooxymethyl)pyrimidine. Mg(2+) contacts are provided by Asp-75 and Asp-94. Ser-113 is a binding site for 4-amino-2-methyl-5-(diphosphooxymethyl)pyrimidine. Position 142-144 (142-144 (TAT)) interacts with 2-[(2R,5Z)-2-carboxy-4-methylthiazol-5(2H)-ylidene]ethyl phosphate. Lys-145 contacts 4-amino-2-methyl-5-(diphosphooxymethyl)pyrimidine. Residues Gly-173 and 193-194 (VS) each bind 2-[(2R,5Z)-2-carboxy-4-methylthiazol-5(2H)-ylidene]ethyl phosphate.

The protein belongs to the thiamine-phosphate synthase family. Mg(2+) serves as cofactor.

The enzyme catalyses 2-[(2R,5Z)-2-carboxy-4-methylthiazol-5(2H)-ylidene]ethyl phosphate + 4-amino-2-methyl-5-(diphosphooxymethyl)pyrimidine + 2 H(+) = thiamine phosphate + CO2 + diphosphate. The catalysed reaction is 2-(2-carboxy-4-methylthiazol-5-yl)ethyl phosphate + 4-amino-2-methyl-5-(diphosphooxymethyl)pyrimidine + 2 H(+) = thiamine phosphate + CO2 + diphosphate. It catalyses the reaction 4-methyl-5-(2-phosphooxyethyl)-thiazole + 4-amino-2-methyl-5-(diphosphooxymethyl)pyrimidine + H(+) = thiamine phosphate + diphosphate. Its pathway is cofactor biosynthesis; thiamine diphosphate biosynthesis; thiamine phosphate from 4-amino-2-methyl-5-diphosphomethylpyrimidine and 4-methyl-5-(2-phosphoethyl)-thiazole: step 1/1. In terms of biological role, condenses 4-methyl-5-(beta-hydroxyethyl)thiazole monophosphate (THZ-P) and 2-methyl-4-amino-5-hydroxymethyl pyrimidine pyrophosphate (HMP-PP) to form thiamine monophosphate (TMP). The chain is Thiamine-phosphate synthase from Psychrobacter sp. (strain PRwf-1).